A 212-amino-acid chain; its full sequence is Ribosomal RNA small subunit methyltransferase G (212 aa).

Residues glycine 80, leucine 85, 131 to 132 (AE), and arginine 146 contribute to the S-adenosyl-L-methionine site.

Belongs to the methyltransferase superfamily. RNA methyltransferase RsmG family.

It localises to the cytoplasm. The catalysed reaction is guanosine(527) in 16S rRNA + S-adenosyl-L-methionine = N(7)-methylguanosine(527) in 16S rRNA + S-adenosyl-L-homocysteine. Its function is as follows. Specifically methylates the N7 position of guanine in position 527 of 16S rRNA. The chain is Ribosomal RNA small subunit methyltransferase G from Xanthomonas axonopodis pv. citri (strain 306).